Reading from the N-terminus, the 347-residue chain is uncharacterized protein (347 aa).

This is an uncharacterized protein from Invertebrate iridescent virus 3 (IIV-3).